Here is a 180-residue protein sequence, read N- to C-terminus: Large ribosomal subunit protein uL6 (180 aa).

This sequence belongs to the universal ribosomal protein uL6 family. Part of the 50S ribosomal subunit.

Its function is as follows. This protein binds to the 23S rRNA, and is important in its secondary structure. It is located near the subunit interface in the base of the L7/L12 stalk, and near the tRNA binding site of the peptidyltransferase center. The polypeptide is Large ribosomal subunit protein uL6 (Lachnoclostridium phytofermentans (strain ATCC 700394 / DSM 18823 / ISDg) (Clostridium phytofermentans)).